Consider the following 319-residue polypeptide: Acetyl-coenzyme A carboxylase carboxyl transferase subunit alpha (319 aa).

The CoA carboxyltransferase C-terminal domain maps to Glu39 to Glu296.

This sequence belongs to the AccA family. In terms of assembly, acetyl-CoA carboxylase is a heterohexamer composed of biotin carboxyl carrier protein (AccB), biotin carboxylase (AccC) and two subunits each of ACCase subunit alpha (AccA) and ACCase subunit beta (AccD).

Its subcellular location is the cytoplasm. It carries out the reaction N(6)-carboxybiotinyl-L-lysyl-[protein] + acetyl-CoA = N(6)-biotinyl-L-lysyl-[protein] + malonyl-CoA. Its pathway is lipid metabolism; malonyl-CoA biosynthesis; malonyl-CoA from acetyl-CoA: step 1/1. In terms of biological role, component of the acetyl coenzyme A carboxylase (ACC) complex. First, biotin carboxylase catalyzes the carboxylation of biotin on its carrier protein (BCCP) and then the CO(2) group is transferred by the carboxyltransferase to acetyl-CoA to form malonyl-CoA. The protein is Acetyl-coenzyme A carboxylase carboxyl transferase subunit alpha of Blochmanniella pennsylvanica (strain BPEN).